Here is a 221-residue protein sequence, read N- to C-terminus: Chaperone protein TorD (221 aa).

It belongs to the TorD/DmsD family. TorD subfamily.

Its subcellular location is the cytoplasm. Its function is as follows. Involved in the biogenesis of TorA. Acts on TorA before the insertion of the molybdenum cofactor and, as a result, probably favors a conformation of the apoenzyme that is competent for acquiring the cofactor. In Psychrobacter sp. (strain PRwf-1), this protein is Chaperone protein TorD.